The following is a 78-amino-acid chain: Large ribosomal subunit protein bL28 (78 aa).

Positions 1-25 (MSRVCQVTGKRPAVGNNRSHARNAT) are disordered.

This sequence belongs to the bacterial ribosomal protein bL28 family.

In Vibrio vulnificus (strain CMCP6), this protein is Large ribosomal subunit protein bL28.